A 55-amino-acid chain; its full sequence is Ferredoxin (55 aa).

4Fe-4S ferredoxin-type domains are found at residues 2-27 (YFIT…SPGD) and 28-55 (SVYV…PQQK). The [4Fe-4S] cluster site is built by cysteine 8, cysteine 11, cysteine 14, cysteine 18, cysteine 37, cysteine 40, cysteine 43, and cysteine 47.

[4Fe-4S] cluster serves as cofactor.

Functionally, ferredoxins are iron-sulfur proteins that transfer electrons in a wide variety of metabolic reactions. This is Ferredoxin from Acetivibrio thermocellus (Hungateiclostridium thermocellum).